The primary structure comprises 209 residues: Uracil phosphoribosyltransferase (209 aa).

Residues Arg-79, Arg-104, and 131-139 (DPMLATGGS) each bind 5-phospho-alpha-D-ribose 1-diphosphate. Residues Ile-194 and 199-201 (GDA) contribute to the uracil site. Residue Asp-200 participates in 5-phospho-alpha-D-ribose 1-diphosphate binding.

It belongs to the UPRTase family. Requires Mg(2+) as cofactor.

It catalyses the reaction UMP + diphosphate = 5-phospho-alpha-D-ribose 1-diphosphate + uracil. The protein operates within pyrimidine metabolism; UMP biosynthesis via salvage pathway; UMP from uracil: step 1/1. With respect to regulation, allosterically activated by GTP. Catalyzes the conversion of uracil and 5-phospho-alpha-D-ribose 1-diphosphate (PRPP) to UMP and diphosphate. The protein is Uracil phosphoribosyltransferase of Exiguobacterium sp. (strain ATCC BAA-1283 / AT1b).